The following is a 639-amino-acid chain: Chaperone protein DnaK (639 aa).

At threonine 197 the chain carries Phosphothreonine; by autocatalysis. Basic and acidic residues-rich tracts occupy residues 514–529 (AEENAEADKDRKDLVE) and 540–553 (GTEKSLEEHGEKVD). Disordered regions lie at residues 514–554 (AEEN…KVDP) and 603–639 (DKAEAAQDGAPEEEERGVDEDIVDADFEDLDDDRKRG). The segment covering 612 to 633 (APEEEERGVDEDIVDADFEDLD) has biased composition (acidic residues).

The protein belongs to the heat shock protein 70 family.

Acts as a chaperone. The protein is Chaperone protein DnaK of Jannaschia sp. (strain CCS1).